A 207-amino-acid chain; its full sequence is Thiamine-phosphate synthase (207 aa).

Residues 36 to 40 (QLRMK) and Asn68 contribute to the 4-amino-2-methyl-5-(diphosphooxymethyl)pyrimidine site. Residues Asp69 and Asp88 each contribute to the Mg(2+) site. Residue Ser106 participates in 4-amino-2-methyl-5-(diphosphooxymethyl)pyrimidine binding. 132–134 (TNT) contacts 2-[(2R,5Z)-2-carboxy-4-methylthiazol-5(2H)-ylidene]ethyl phosphate. Lys135 is a 4-amino-2-methyl-5-(diphosphooxymethyl)pyrimidine binding site. 2-[(2R,5Z)-2-carboxy-4-methylthiazol-5(2H)-ylidene]ethyl phosphate contacts are provided by residues Gly162 and 182 to 183 (VS).

Belongs to the thiamine-phosphate synthase family. Mg(2+) is required as a cofactor.

The catalysed reaction is 2-[(2R,5Z)-2-carboxy-4-methylthiazol-5(2H)-ylidene]ethyl phosphate + 4-amino-2-methyl-5-(diphosphooxymethyl)pyrimidine + 2 H(+) = thiamine phosphate + CO2 + diphosphate. It carries out the reaction 2-(2-carboxy-4-methylthiazol-5-yl)ethyl phosphate + 4-amino-2-methyl-5-(diphosphooxymethyl)pyrimidine + 2 H(+) = thiamine phosphate + CO2 + diphosphate. The enzyme catalyses 4-methyl-5-(2-phosphooxyethyl)-thiazole + 4-amino-2-methyl-5-(diphosphooxymethyl)pyrimidine + H(+) = thiamine phosphate + diphosphate. The protein operates within cofactor biosynthesis; thiamine diphosphate biosynthesis; thiamine phosphate from 4-amino-2-methyl-5-diphosphomethylpyrimidine and 4-methyl-5-(2-phosphoethyl)-thiazole: step 1/1. Its function is as follows. Condenses 4-methyl-5-(beta-hydroxyethyl)thiazole monophosphate (THZ-P) and 2-methyl-4-amino-5-hydroxymethyl pyrimidine pyrophosphate (HMP-PP) to form thiamine monophosphate (TMP). The sequence is that of Thiamine-phosphate synthase from Methanococcus maripaludis (strain C5 / ATCC BAA-1333).